The primary structure comprises 739 residues: DNA ligase (739 aa).

The segment at 1–29 (MTANRPALPTRDKAVSDLSATEASDEHAA) is disordered. NAD(+) contacts are provided by residues 51–55 (DADYD), 100–101 (SL), and Glu134. Lys136 acts as the N6-AMP-lysine intermediate in catalysis. Residues Arg157, Glu194, Lys311, and Lys335 each coordinate NAD(+). Zn(2+)-binding residues include Cys440, Cys443, Cys464, and Cys470. The disordered stretch occupies residues 592 to 612 (PTEMEEASEETPPTRRRKPQG). In terms of domain architecture, BRCT spans 662–739 (ASTSPVSGKT…TEDEWFDLVG (78 aa)).

It belongs to the NAD-dependent DNA ligase family. LigA subfamily. Mg(2+) is required as a cofactor. Mn(2+) serves as cofactor.

The catalysed reaction is NAD(+) + (deoxyribonucleotide)n-3'-hydroxyl + 5'-phospho-(deoxyribonucleotide)m = (deoxyribonucleotide)n+m + AMP + beta-nicotinamide D-nucleotide.. DNA ligase that catalyzes the formation of phosphodiester linkages between 5'-phosphoryl and 3'-hydroxyl groups in double-stranded DNA using NAD as a coenzyme and as the energy source for the reaction. It is essential for DNA replication and repair of damaged DNA. The chain is DNA ligase from Azorhizobium caulinodans (strain ATCC 43989 / DSM 5975 / JCM 20966 / LMG 6465 / NBRC 14845 / NCIMB 13405 / ORS 571).